Reading from the N-terminus, the 477-residue chain is Serine/threonine-protein kinase prp4 (477 aa).

Residues 25 to 123 form a disordered region; that stretch reads KYQQTGNGHS…SPSVKRQNTG (99 aa). A compositionally biased stretch (basic and acidic residues) spans 38–47; sequence IPEKKLKEDV. Over residues 74 to 86 the composition is skewed to polar residues; it reads EGSNSNTKLDVTN. Over residues 87–98 the composition is skewed to low complexity; the sequence is STTSDSPSIKSS. Residue serine 92 is modified to Phosphoserine. Residues 113–123 are compositionally biased toward polar residues; it reads PSPSVKRQNTG. The Protein kinase domain maps to 159–477; the sequence is YIVQSNLGKG…ALKHPFFIKK (319 aa). Residues 165-173 and lysine 188 each bind ATP; that span reads LGKGMFSTV. Catalysis depends on aspartate 286, which acts as the Proton acceptor. A Phosphotyrosine modification is found at tyrosine 320.

It belongs to the protein kinase superfamily. CMGC Ser/Thr protein kinase family.

The enzyme catalyses L-seryl-[protein] + ATP = O-phospho-L-seryl-[protein] + ADP + H(+). It carries out the reaction L-threonyl-[protein] + ATP = O-phospho-L-threonyl-[protein] + ADP + H(+). In terms of biological role, has a role in pre-mRNA splicing and is essential for growth. Phosphorylates srp1. The chain is Serine/threonine-protein kinase prp4 (prp4) from Schizosaccharomyces pombe (strain 972 / ATCC 24843) (Fission yeast).